A 356-amino-acid polypeptide reads, in one-letter code: Cobalt-precorrin-5B C(1)-methyltransferase (356 aa).

It belongs to the CbiD family.

The enzyme catalyses Co-precorrin-5B + S-adenosyl-L-methionine = Co-precorrin-6A + S-adenosyl-L-homocysteine. Its pathway is cofactor biosynthesis; adenosylcobalamin biosynthesis; cob(II)yrinate a,c-diamide from sirohydrochlorin (anaerobic route): step 6/10. Its function is as follows. Catalyzes the methylation of C-1 in cobalt-precorrin-5B to form cobalt-precorrin-6A. The polypeptide is Cobalt-precorrin-5B C(1)-methyltransferase (Geobacter sp. (strain M21)).